The sequence spans 149 residues: Nucleoside diphosphate kinase 1 (149 aa).

ATP-binding residues include lysine 10, phenylalanine 58, arginine 86, threonine 92, arginine 103, and asparagine 113. Catalysis depends on histidine 116, which acts as the Pros-phosphohistidine intermediate.

This sequence belongs to the NDK family. Mg(2+) is required as a cofactor.

The catalysed reaction is a 2'-deoxyribonucleoside 5'-diphosphate + ATP = a 2'-deoxyribonucleoside 5'-triphosphate + ADP. It catalyses the reaction a ribonucleoside 5'-diphosphate + ATP = a ribonucleoside 5'-triphosphate + ADP. Major role in the synthesis of nucleoside triphosphates other than ATP. The ATP gamma phosphate is transferred to the NDP beta phosphate via a ping-pong mechanism, using a phosphorylated active-site intermediate. This NDK is microtubule-associated. The protein is Nucleoside diphosphate kinase 1 (NDPK1) of Pisum sativum (Garden pea).